We begin with the raw amino-acid sequence, 478 residues long: NADH-quinone oxidoreductase subunit N (478 aa).

13 helical membrane passes run 8–28 (LVLP…FGVW), 38–58 (ILWA…LGTG), 62–82 (AFGG…VILV), 106–126 (PILI…GDLM), 160–180 (FVLG…VYGF), 200–220 (IGLL…VSAV), 234–254 (PTPV…ALIA), 268–288 (WGQI…IAGI), 300–320 (SSIS…AAGV), 322–342 (SMLL…AFIL), 368–388 (AFAL…LGFF), 398–418 (IGAG…IGAF), and 445–465 (FAFL…MAGV).

Belongs to the complex I subunit 2 family. NDH-1 is composed of 14 different subunits. Subunits NuoA, H, J, K, L, M, N constitute the membrane sector of the complex.

Its subcellular location is the cellular chromatophore membrane. It catalyses the reaction a quinone + NADH + 5 H(+)(in) = a quinol + NAD(+) + 4 H(+)(out). NDH-1 shuttles electrons from NADH, via FMN and iron-sulfur (Fe-S) centers, to quinones in the respiratory chain. The immediate electron acceptor for the enzyme in this species is believed to be ubiquinone. Couples the redox reaction to proton translocation (for every two electrons transferred, four hydrogen ions are translocated across the cytoplasmic membrane), and thus conserves the redox energy in a proton gradient. The protein is NADH-quinone oxidoreductase subunit N of Rhodobacter capsulatus (Rhodopseudomonas capsulata).